We begin with the raw amino-acid sequence, 28 residues long: Small integral membrane protein 47 (28 aa).

A helical transmembrane segment spans residues 7–24 (VTLAMALFTILTSIYFFN).

It is found in the membrane. The chain is Small integral membrane protein 47 from Homo sapiens (Human).